Reading from the N-terminus, the 507-residue chain is Zinc finger protein Aiolos (507 aa).

A disordered region spans residues 1–85 (MEDIQPTVEL…PMGDAEESEM (85 aa)). T20 carries the post-translational modification Phosphothreonine. Residues S22 and S42 each carry the phosphoserine modification. 2 stretches are compositionally biased toward basic and acidic residues: residues 33 to 46 (KPHE…REAP) and 56 to 72 (DSMK…ENIM). Residues K61, K73, and K100 each participate in a glycyl lysine isopeptide (Lys-Gly) (interchain with G-Cter in SUMO2) cross-link. C2H2-type zinc fingers lie at residues 117-139 (MNCD…KRSH), 145-167 (FQCN…IKLH), and 173-195 (FKCH…LRTH). The C2H2-type 4; atypical zinc-finger motif lies at 201–223 (YKCEFCGRSYKQRSSLEEHKERC). K244 is covalently cross-linked (Glycyl lysine isopeptide (Lys-Gly) (interchain with G-Cter in SUMO2)). T325 is modified (phosphothreonine). Positions 370 to 396 (LPSERGLSPNNSAQDSTDTDSNHEDRQ) are disordered. A Phosphoserine modification is found at S377. A C2H2-type 5 zinc finger spans residues 450–472 (FRCDHCHVLFLDYVMFTIHMGCH). The interval 450-502 (FRCDHCHVLFLDYVMFTIHMGCHGFRDPFECNMCGYRSHDRYEFSSHIARGEH) is mediates homodimerization and heterodimerization. The C2H2-type 6; atypical zinc finger occupies 478 to 502 (FECNMCGYRSHDRYEFSSHIARGEH).

This sequence belongs to the Ikaros C2H2-type zinc-finger protein family. Homodimer. Heterodimer with other IKAROS family members. Interacts with IKZF4 and IKZF5. Interacts with HRAS. Interacts with FOXP3; this interaction may be required for silencing target genes and regulating the suppressive activity of FOXP3-positive regulatory T-cells (Treg). Interacts with BCL21L isoform Bcl-X(L); this interaction blocks the anti-apoptotic role of BCL21L. Associates with histone deacetylase complexes containing HDAC1, MTA2 and SIN3A. Interacts with IKZF1. In terms of tissue distribution, expression is restricted to lymphoid tissues. Expressed at highest levels in spleen and at lower levels in the thymus and bone marrow. First detected in more committed lymphoid progenitors and strongly up-regulated as these differentiate into pre-T and pre-B cell precursors.

The protein resides in the nucleus. It localises to the cytoplasm. Transcription factor that plays an important role in the regulation of lymphocyte differentiation. Binds to GGGAA. Plays an essential role in regulation of B-cell differentiation, proliferation and maturation to an effector state. Involved in regulating BCL2 expression and controlling apoptosis in T-cells in an IL2-dependent manner. This Mus musculus (Mouse) protein is Zinc finger protein Aiolos (Ikzf3).